Here is a 268-residue protein sequence, read N- to C-terminus: Undecaprenyl-diphosphatase (268 aa).

A run of 7 helical transmembrane segments spans residues 41 to 61 (PGPS…VCYF), 89 to 109 (IFIG…FVPY), 114 to 134 (IFRS…LMYI), 155 to 175 (LIGL…GVTI), 191 to 211 (FSFL…FISS), 218 to 238 (FSFF…LLAI), and 248 to 268 (NGLK…LLNL).

This sequence belongs to the UppP family.

It is found in the cell inner membrane. The enzyme catalyses di-trans,octa-cis-undecaprenyl diphosphate + H2O = di-trans,octa-cis-undecaprenyl phosphate + phosphate + H(+). Its function is as follows. Catalyzes the dephosphorylation of undecaprenyl diphosphate (UPP). Confers resistance to bacitracin. This Prochlorococcus marinus (strain MIT 9312) protein is Undecaprenyl-diphosphatase.